The sequence spans 215 residues: Ribonuclease (215 aa).

The first 22 residues, Met1–Ala22, serve as a signal peptide directing secretion. Catalysis depends on residues His62, Glu102, and His106. Positions Lys144–Gly166 are disordered.

Belongs to the RNase T2 family.

Its subcellular location is the periplasm. The protein localises to the cytoplasm. One of the few RNases that cleave the phosphodiester bond between any two nucleotide. Shows a preference for adenylic acid. The sequence is that of Ribonuclease from Aeromonas hydrophila.